A 148-amino-acid chain; its full sequence is Protein ORM1 (148 aa).

4 helical membrane-spanning segments follow: residues 12–32, 36–56, 89–109, and 111–131; these read WIIH…FPGV, WSWT…FHLI, FLII…HYDL, and MFSW…LPVT.

The protein to yeast YLR350W C-terminus.

The protein localises to the membrane. In Saccharomyces pastorianus (strain ATCC 76670 / Carlsberg bottom yeast no.2 / CBS 1503 / CLIB 180 / NBRC 10610 / NRRL Y-1525) (Saaz-type lager yeast), this protein is Protein ORM1 (ORM1).